The following is a 442-amino-acid chain: GTPase Der (442 aa).

EngA-type G domains are found at residues 4–169 (PIVA…PENN) and 178–353 (IKIA…EQAT). Residues 10-17 (GRPNVGKS), 57-61 (DTGGL), 121-124 (NKIE), 184-191 (GRPNVGKS), 231-235 (DTAGM), and 296-299 (NKWD) contribute to the GTP site. The region spanning 354 to 438 (RRISTSVLNE…PMRFFIRERE (85 aa)) is the KH-like domain.

The protein belongs to the TRAFAC class TrmE-Era-EngA-EngB-Septin-like GTPase superfamily. EngA (Der) GTPase family. Associates with the 50S ribosomal subunit.

Its function is as follows. GTPase that plays an essential role in the late steps of ribosome biogenesis. This chain is GTPase Der, found in Heliobacterium modesticaldum (strain ATCC 51547 / Ice1).